Consider the following 371-residue polypeptide: MSLENKNIIITAGGTGGHIYPALAIAELLRQNKANVTWVGTPNSMEASIVPEYFNIQFIKSSGVRRKGIIKKITFPLKLAYNTLKSRSLLKKLKADLVIGFGGYVSGPICLAAAQINIPVIIHEQNAKIGLTNRILAKFATTICLAFEIENLHKQFSSKQLAKTKIVGNPVRKDIVALNDKARIYTDSSTLKILVLGGSQGAKAINEIIPKLIQKSNEQGINIKVWHQTGKLSLEETKDAYKDISQNHIKDIAAFIDDMAIAYNWADLVICRAGALTVSECAIAGLPAIFIPLPSAVDDHQFFNAQNIVNNNAGFCLRQQQMTLENLLAIIKPLNQDRSKLEQMSKMAKKTLIKNSSEQILDCVKKILNNK.

Residues Thr15 to Gly17, Asn126, Arg172, Ser199, Ile256, Ala275 to Glu280, and Gln301 each bind UDP-N-acetyl-alpha-D-glucosamine.

It belongs to the glycosyltransferase 28 family. MurG subfamily.

Its subcellular location is the cell inner membrane. The enzyme catalyses di-trans,octa-cis-undecaprenyl diphospho-N-acetyl-alpha-D-muramoyl-L-alanyl-D-glutamyl-meso-2,6-diaminopimeloyl-D-alanyl-D-alanine + UDP-N-acetyl-alpha-D-glucosamine = di-trans,octa-cis-undecaprenyl diphospho-[N-acetyl-alpha-D-glucosaminyl-(1-&gt;4)]-N-acetyl-alpha-D-muramoyl-L-alanyl-D-glutamyl-meso-2,6-diaminopimeloyl-D-alanyl-D-alanine + UDP + H(+). Its pathway is cell wall biogenesis; peptidoglycan biosynthesis. Its function is as follows. Cell wall formation. Catalyzes the transfer of a GlcNAc subunit on undecaprenyl-pyrophosphoryl-MurNAc-pentapeptide (lipid intermediate I) to form undecaprenyl-pyrophosphoryl-MurNAc-(pentapeptide)GlcNAc (lipid intermediate II). The sequence is that of UDP-N-acetylglucosamine--N-acetylmuramyl-(pentapeptide) pyrophosphoryl-undecaprenol N-acetylglucosamine transferase from Francisella tularensis subsp. tularensis (strain WY96-3418).